We begin with the raw amino-acid sequence, 98 residues long: NADH-ubiquinone oxidoreductase chain 4L (98 aa).

Transmembrane regions (helical) follow at residues 1-21 (MTLI…GLLM), 29-49 (ALLC…LTIL), and 61-81 (IILL…LVMV).

It belongs to the complex I subunit 4L family. As to quaternary structure, core subunit of respiratory chain NADH dehydrogenase (Complex I) which is composed of 45 different subunits.

It is found in the mitochondrion inner membrane. The enzyme catalyses a ubiquinone + NADH + 5 H(+)(in) = a ubiquinol + NAD(+) + 4 H(+)(out). Functionally, core subunit of the mitochondrial membrane respiratory chain NADH dehydrogenase (Complex I) which catalyzes electron transfer from NADH through the respiratory chain, using ubiquinone as an electron acceptor. Part of the enzyme membrane arm which is embedded in the lipid bilayer and involved in proton translocation. The chain is NADH-ubiquinone oxidoreductase chain 4L (MT-ND4L) from Balaenoptera borealis (Sei whale).